Here is a 69-residue protein sequence, read N- to C-terminus: Beta-defensin 11 (69 aa).

Residues 1-23 (MRTLCSLLLIGCLLFSYDTPVVG) form the signal peptide. 3 cysteine pairs are disulfide-bonded: Cys-35/Cys-64, Cys-42/Cys-57, and Cys-47/Cys-65.

Belongs to the beta-defensin family.

The protein resides in the secreted. Its function is as follows. Has antibacterial activity. In Rattus norvegicus (Rat), this protein is Beta-defensin 11 (Defb11).